The primary structure comprises 185 residues: MIILGIDEAGRGPLSGPVVAAGVILDPEKTIDGLADSKKLTEKKRQSLYEVITAHAKAYTIVEVSPQQIDQLNILQATLKAMNQVADNLKGQFDKVLVDGNKLPNWDYNSEAIVKGDSKVQEISAASILAKVHRDNICLEHDRLFPQYGFAKHKGYPTKEHLENIRKYGVLNIHRKSYKPIQLLL.

The RNase H type-2 domain occupies 1-185; the sequence is MIILGIDEAG…KSYKPIQLLL (185 aa). Residues D7, E8, and D99 each contribute to the a divalent metal cation site.

Belongs to the RNase HII family. The cofactor is Mn(2+). Mg(2+) serves as cofactor.

The protein resides in the cytoplasm. It catalyses the reaction Endonucleolytic cleavage to 5'-phosphomonoester.. In terms of biological role, endonuclease that specifically degrades the RNA of RNA-DNA hybrids. This is Ribonuclease HII from Francisella philomiragia subsp. philomiragia (strain ATCC 25017 / CCUG 19701 / FSC 153 / O#319-036).